The primary structure comprises 173 residues: Protein SUGARY ENHANCER 1 (173 aa).

Residues methionine 1–glycine 31 are disordered.

The protein belongs to the fantastic four family.

In terms of biological role, involved in starch metabolism in endosperm. Acts as a modifier of SUGARY1 (SU1), an isoamylase starch-debranching enzyme involved in amylopectin biosynthesis in endosperm. The sequence is that of Protein SUGARY ENHANCER 1 from Zea mays (Maize).